Consider the following 190-residue polypeptide: MIGKLTGTLLEKNPPEVLVDCHGVGYEVQVSMSTFYNLPAVGERVSLLTQFIVREDAQLLYGFGTAQERQAFRELIKISGVGPRTALSILSGMGVADLAQAVSLQEAGRLVKVPGIGKKTAERLLLELKGKLGADVGVRAHAANDNQADILQALLALGYNDKEAAAALKALPADVGVSEGIKLALKSLSK.

Residues 1-64 form a domain I region; that stretch reads MIGKLTGTLL…EDAQLLYGFG (64 aa). Positions 65–137 are domain II; the sequence is TAQERQAFRE…LKGKLGADVG (73 aa). The tract at residues 137-141 is flexible linker; it reads GVRAH. A domain III region spans residues 142–190; the sequence is AANDNQADILQALLALGYNDKEAAAALKALPADVGVSEGIKLALKSLSK.

The protein belongs to the RuvA family. As to quaternary structure, homotetramer. Forms an RuvA(8)-RuvB(12)-Holliday junction (HJ) complex. HJ DNA is sandwiched between 2 RuvA tetramers; dsDNA enters through RuvA and exits via RuvB. An RuvB hexamer assembles on each DNA strand where it exits the tetramer. Each RuvB hexamer is contacted by two RuvA subunits (via domain III) on 2 adjacent RuvB subunits; this complex drives branch migration. In the full resolvosome a probable DNA-RuvA(4)-RuvB(12)-RuvC(2) complex forms which resolves the HJ.

It is found in the cytoplasm. Functionally, the RuvA-RuvB-RuvC complex processes Holliday junction (HJ) DNA during genetic recombination and DNA repair, while the RuvA-RuvB complex plays an important role in the rescue of blocked DNA replication forks via replication fork reversal (RFR). RuvA specifically binds to HJ cruciform DNA, conferring on it an open structure. The RuvB hexamer acts as an ATP-dependent pump, pulling dsDNA into and through the RuvAB complex. HJ branch migration allows RuvC to scan DNA until it finds its consensus sequence, where it cleaves and resolves the cruciform DNA. The protein is Holliday junction branch migration complex subunit RuvA of Acidovorax sp. (strain JS42).